A 298-amino-acid polypeptide reads, in one-letter code: ADP/ATP translocase 2 (298 aa).

The residue at position 1 (methionine 1) is an N-acetylmethionine. At 1-7 the chain is on the mitochondrial intermembrane side; the sequence is MTDAAVS. An N-acetylthreonine; in ADP/ATP translocase 2, N-terminally processed modification is found at threonine 2. One copy of the Solcar 1 repeat lies at 6-98; the sequence is VSFAKDFLAG…FAFKDKYKQI (93 aa). Serine 7 is modified (phosphoserine). A helical transmembrane segment spans residues 8 to 37; sequence FAKDFLAGGVAAAISKTAVAPIERVKLLLQ. An N6-malonyllysine modification is found at lysine 23. Over 38–74 the chain is Mitochondrial matrix; that stretch reads VQHASKQITADKQYKGIIDCVVRIPKEQGVLSFWRGN. Lysine 43 bears the N6-succinyllysine mark. The residue at position 52 (lysine 52) is an N6,N6,N6-trimethyllysine; alternate. Position 52 is an N6,N6-dimethyllysine; alternate (lysine 52). Lysine 52 bears the N6-methyllysine; alternate mark. Residues 75-99 traverse the membrane as a helical segment; sequence LANVIRYFPTQALNFAFKDKYKQIF. 2 residues coordinate ADP: arginine 80 and lysine 92. N6-malonyllysine occurs at positions 92 and 96. The Mitochondrial intermembrane segment spans residues 100 to 109; that stretch reads LGGVDKRTQF. At lysine 105 the chain carries N6-acetyllysine; alternate. The residue at position 105 (lysine 105) is an N6-succinyllysine; alternate. Residues 110–130 traverse the membrane as a helical segment; the sequence is WRYFAGNLASGGAAGATSLCF. Solcar repeat units lie at residues 111–201 and 212–297; these read RYFA…AKGM and ISWM…IKKY. Topologically, residues 131-178 are mitochondrial matrix; that stretch reads VYPLDFARTRLAADVGKAGAEREFKGLGDCLVKIYKSDGIKGLYQGFN. At lysine 147 the chain carries N6-methyllysine; alternate. Residues lysine 147 and lysine 155 each carry the N6-acetyllysine; alternate modification. An N6-succinyllysine; alternate mark is found at lysine 147 and lysine 155. Residue lysine 147 is modified to N6-malonyllysine; alternate. Lysine 163 and lysine 166 each carry N6-acetyllysine. The chain crosses the membrane as a helical span at residues 179–199; that stretch reads VSVQGIIIYRAAYFGIYDTAK. Residues 200–210 lie on the Mitochondrial intermembrane side of the membrane; sequence GMLPDPKNTHI. Residues 211-231 traverse the membrane as a helical segment; it reads FISWMIAQSVTAVAGLTSYPF. Over 232 to 273 the chain is Mitochondrial matrix; that stretch reads DTVRRRMMMQSGRKGTDIMYTGTLDCWRKIARDEGGKAFFKG. An ADP-binding site is contributed by arginine 235. Residues 235 to 240 are important for transport activity; it reads RRRMMM. Residues 235–240 carry the Nucleotide carrier signature motif motif; the sequence is RRRMMM. Lysine 268 is modified (N6-acetyllysine; alternate). Lysine 268 bears the N6-succinyllysine; alternate mark. A helical transmembrane segment spans residues 274–291; sequence AWSNVLRGMGGAFVLVLY. The Mitochondrial intermembrane segment spans residues 292–298; sequence DEIKKYT.

It belongs to the mitochondrial carrier (TC 2.A.29) family. As to quaternary structure, monomer. Component of the MMXD complex, which includes CIAO1, ERCC2, CIAO2B, MMS19 and SLC25A5/ANT2. Interacts with AK4. Interacts with TIMM44; leading to inhibit the presequence translocase TIMM23, thereby promoting stabilization of PINK1. In terms of processing, trimethylated by ANTKMT at Lys-52. In terms of tissue distribution, present in kidney, brain, heart, liver and skeletal muscle.

Its subcellular location is the mitochondrion inner membrane. It localises to the membrane. It carries out the reaction ADP(in) + ATP(out) = ADP(out) + ATP(in). The catalysed reaction is H(+)(in) = H(+)(out). With respect to regulation, the matrix-open state (m-state) is inhibited by the membrane-permeable bongkrekic acid (BKA). The cytoplasmic-open state (c-state) is inhibited by the membrane-impermeable toxic inhibitor carboxyatractyloside (CATR). Proton transporter activity is inhibited by ADP:ATP antiporter activity. In terms of biological role, ADP:ATP antiporter that mediates import of ADP into the mitochondrial matrix for ATP synthesis, and export of ATP out to fuel the cell. Cycles between the cytoplasmic-open state (c-state) and the matrix-open state (m-state): operates by the alternating access mechanism with a single substrate-binding site intermittently exposed to either the cytosolic (c-state) or matrix (m-state) side of the inner mitochondrial membrane. In addition to its ADP:ATP antiporter activity, also involved in mitochondrial uncoupling and mitochondrial permeability transition pore (mPTP) activity. Plays a role in mitochondrial uncoupling by acting as a proton transporter: proton transport uncouples the proton flows via the electron transport chain and ATP synthase to reduce the efficiency of ATP production and cause mitochondrial thermogenesis. Proton transporter activity is inhibited by ADP:ATP antiporter activity, suggesting that SLC25A5/ANT2 acts as a master regulator of mitochondrial energy output by maintaining a delicate balance between ATP production (ADP:ATP antiporter activity) and thermogenesis (proton transporter activity). Proton transporter activity requires free fatty acids as cofactor, but does not transport it. Probably mediates mitochondrial uncoupling in tissues that do not express UCP1. Also plays a key role in mPTP opening, a non-specific pore that enables free passage of the mitochondrial membranes to solutes of up to 1.5 kDa, and which contributes to cell death. It is however unclear if SLC25A5/ANT2 constitutes a pore-forming component of mPTP or regulates it. Acts as a regulator of mitophagy independently of ADP:ATP antiporter activity: promotes mitophagy via interaction with TIMM44, leading to inhibit the presequence translocase TIMM23, thereby promoting stabilization of PINK1. As part of the mitotic spindle-associated MMXD complex it may play a role in chromosome segregation. The protein is ADP/ATP translocase 2 of Rattus norvegicus (Rat).